The following is a 338-amino-acid chain: Fructose-1,6-bisphosphatase class 1 (338 aa).

Residues E92, D115, L117, and D118 each contribute to the Mg(2+) site. Residues 118–121, N211, Y244, and K274 each bind substrate; that span reads DGSS. E280 is a binding site for Mg(2+).

It belongs to the FBPase class 1 family. In terms of assembly, homotetramer. It depends on Mg(2+) as a cofactor.

It is found in the cytoplasm. It carries out the reaction beta-D-fructose 1,6-bisphosphate + H2O = beta-D-fructose 6-phosphate + phosphate. It participates in carbohydrate biosynthesis; gluconeogenesis. The polypeptide is Fructose-1,6-bisphosphatase class 1 (Photobacterium profundum (strain SS9)).